Consider the following 236-residue polypeptide: Aspartate/glutamate leucyltransferase (236 aa).

Belongs to the R-transferase family. Bpt subfamily.

The protein localises to the cytoplasm. The enzyme catalyses N-terminal L-glutamyl-[protein] + L-leucyl-tRNA(Leu) = N-terminal L-leucyl-L-glutamyl-[protein] + tRNA(Leu) + H(+). The catalysed reaction is N-terminal L-aspartyl-[protein] + L-leucyl-tRNA(Leu) = N-terminal L-leucyl-L-aspartyl-[protein] + tRNA(Leu) + H(+). In terms of biological role, functions in the N-end rule pathway of protein degradation where it conjugates Leu from its aminoacyl-tRNA to the N-termini of proteins containing an N-terminal aspartate or glutamate. The sequence is that of Aspartate/glutamate leucyltransferase from Saccharophagus degradans (strain 2-40 / ATCC 43961 / DSM 17024).